We begin with the raw amino-acid sequence, 1229 residues long: uncharacterized protein (1229 aa).

Positions 1–19 (MKYFLLLFLLVLSFTLVES) are cleaved as a signal peptide. N-linked (GlcNAc...) asparagine glycosylation is found at N238, N270, N370, N538, N691, and N701. One can recognise a Galectin 1 domain in the interval 678–813 (RMVNFANVME…QWNIDTVKMN (136 aa)). Polar residues predominate over residues 818-829 (HTTTVEPSTPLE). A disordered region spans residues 818–903 (HTTTVEPSTP…TLPPTTTPYN (86 aa)). Residues 830–846 (TASTSQSTPSATLTSTT) show a composition bias toward low complexity. Polar residues predominate over residues 847 to 869 (ENIPSTSKIPETSTTQRPTSPIL). A compositionally biased stretch (low complexity) spans 870 to 901 (TSGATSTSSSTESTTTSPTTSTTTTLPPTTTP). Residues N903, N938, and N948 are each glycosylated (N-linked (GlcNAc...) asparagine). The 135-residue stretch at 925 to 1059 (RPVVFSRYME…ESTIDTVSMA (135 aa)) folds into the Galectin 2 domain. Residues 1061–1087 (VRPPTTPTTTTSTTTTTTPKLTTTSTL) are disordered. The span at 1067 to 1087 (PTTTTSTTTTTTPKLTTTSTL) shows a compositional bias: low complexity. N-linked (GlcNAc...) asparagine glycosylation occurs at N1146.

This is an uncharacterized protein from Caenorhabditis elegans.